Consider the following 136-residue polypeptide: ATP synthase epsilon chain (136 aa).

Positions 104-136 (AGMEGQPASPEKVKAQQQLNEARARMQASKSAD) are disordered.

The protein belongs to the ATPase epsilon chain family. As to quaternary structure, F-type ATPases have 2 components, CF(1) - the catalytic core - and CF(0) - the membrane proton channel. CF(1) has five subunits: alpha(3), beta(3), gamma(1), delta(1), epsilon(1). CF(0) has three main subunits: a, b and c.

It is found in the cellular thylakoid membrane. Produces ATP from ADP in the presence of a proton gradient across the membrane. The sequence is that of ATP synthase epsilon chain from Synechococcus sp. (strain CC9902).